Consider the following 344-residue polypeptide: MSQELTLQQRMDGEAGSDPLRQAVKEAVAALARAAVDISDLTCRGALAGITGQAQGRNTDGDIQKDLDVRADQIIRDALGKLPIAALASEEMADLDILNPAAPICVAFDPLDGSSNINTNMSVGTIFSIMPTPSDVNAAFRQAGSAQLAAGFVVYGPQTSLVLTLGRGVDIFTLDRADRVFKLTGSSVQIPTDANEFAINASNRRHWDLPVRAYIDECLAGADGPCGKNFNMRWIGSLVAEAFRILIRGGIFLYPGDARDGYEEGRLVVYEAHPMAFIVEQAGGGASTGRKRVLDIVPDSLHQRVPLIMGSIKNVQRLEHMHTVPDVALEANAPLFGNRGLFRV.

Mg(2+) contacts are provided by Glu-90, Asp-109, Leu-111, and Asp-112. Substrate-binding positions include 112–115 (DGSS) and Asn-200. Glu-271 serves as a coordination point for Mg(2+).

The protein belongs to the FBPase class 1 family. In terms of assembly, homotetramer. It depends on Mg(2+) as a cofactor.

The protein resides in the cytoplasm. It catalyses the reaction beta-D-fructose 1,6-bisphosphate + H2O = beta-D-fructose 6-phosphate + phosphate. It participates in carbohydrate biosynthesis; gluconeogenesis. The chain is Fructose-1,6-bisphosphatase class 1 from Nitrobacter vulgaris.